A 307-amino-acid polypeptide reads, in one-letter code: Ribosomal RNA small subunit methyltransferase H (307 aa).

S-adenosyl-L-methionine is bound by residues 32 to 34 (GGH), Asp-52, Phe-78, Asp-100, and Gln-107.

This sequence belongs to the methyltransferase superfamily. RsmH family.

It localises to the cytoplasm. The enzyme catalyses cytidine(1402) in 16S rRNA + S-adenosyl-L-methionine = N(4)-methylcytidine(1402) in 16S rRNA + S-adenosyl-L-homocysteine + H(+). In terms of biological role, specifically methylates the N4 position of cytidine in position 1402 (C1402) of 16S rRNA. This chain is Ribosomal RNA small subunit methyltransferase H, found in Coxiella burnetii (strain CbuK_Q154) (Coxiella burnetii (strain Q154)).